The following is a 173-amino-acid chain: MDIAIQHPWFKRALGPFYPSRLFDQFFGEGLFEYDLLPFLSSTISPYYRQSLFRSVLDSGISEVRSDRDKFVIFLDVKHFSPEDLTVKVQEDFVEIHGKHNERQDDHGYISREFHRRYRLPSNVDQSALSCSLSADGMLTFSGPKVTSGMDAGHSERAIPVSREEKPSSAPSS.

Met-1 carries the N-acetylmethionine modification. Residues 1–63 (MDIAIQHPWF…RSVLDSGISE (63 aa)) form a required for complex formation with BFSP1 and BFSP2 region. At Gln-6 the chain carries Deamidated glutamine; partial. Ser-45 carries the phosphoserine modification. Gln-50 is modified (deamidated glutamine; partial). Residues 52 to 162 (LFRSVLDSGI…GHSERAIPVS (111 aa)) form the sHSP domain. Lys-70 carries the post-translational modification N6-acetyllysine. Gln-90 carries the deamidated glutamine; partial modification. The residue at position 99 (Lys-99) is an N6-acetyllysine. His-100 contributes to the Zn(2+) binding site. Asn-101 is modified (deamidated asparagine; partial). Residues Glu-102 and His-107 each coordinate Zn(2+). Ser-122 carries the phosphoserine modification. Asn-123 carries the deamidated asparagine; partial modification. The segment at 144–173 (PKVTSGMDAGHSERAIPVSREEKPSSAPSS) is disordered. Basic and acidic residues predominate over residues 153 to 167 (GHSERAIPVSREEKP). Residue His-154 participates in Zn(2+) binding. O-linked (GlcNAc) serine glycosylation occurs at Ser-162.

The protein belongs to the small heat shock protein (HSP20) family. As to quaternary structure, heteromer composed of three CRYAA and one CRYAB subunits. Inter-subunit bridging via zinc ions enhances stability, which is crucial as there is no protein turn over in the lens. Can also form homodimers and homotetramers (dimers of dimers) which serve as the building blocks of homooligomers. Within homooligomers, the zinc-binding motif is created from residues of 3 different molecules. His-100 and Glu-102 from one molecule are ligands of the zinc ion, and His-107 and His-154 residues from additional molecules complete the site with tetrahedral coordination geometry. Part of a complex required for lens intermediate filament formation composed of BFSP1, BFSP2 and CRYAA. Post-translationally, acetylation at Lys-70 may increase chaperone activity. In terms of processing, undergoes age-dependent proteolytical cleavage at the C-terminus.

The protein localises to the cytoplasm. The protein resides in the nucleus. In terms of biological role, contributes to the transparency and refractive index of the lens. Acts as a chaperone, preventing aggregation of various proteins under a wide range of stress conditions. Required for the correct formation of lens intermediate filaments as part of a complex composed of BFSP1, BFSP2 and CRYAA. The chain is Alpha-crystallin A chain (CRYAA) from Phocoena phocoena (Harbor porpoise).